The primary structure comprises 400 residues: Elongation factor Tu (400 aa).

Residues Lys10–Gln208 enclose the tr-type G domain. The interval Gly19–Thr26 is G1. Residue Gly19–Thr26 coordinates GTP. Thr26 is a Mg(2+) binding site. The G2 stretch occupies residues Gly60–Asn64. A G3 region spans residues Asp81 to Gly84. GTP is bound by residues Asp81–His85 and Asn136–Asp139. Residues Asn136–Asp139 are G4. The interval Ser174–Leu176 is G5.

This sequence belongs to the TRAFAC class translation factor GTPase superfamily. Classic translation factor GTPase family. EF-Tu/EF-1A subfamily. Monomer.

It localises to the cytoplasm. It carries out the reaction GTP + H2O = GDP + phosphate + H(+). GTP hydrolase that promotes the GTP-dependent binding of aminoacyl-tRNA to the A-site of ribosomes during protein biosynthesis. The polypeptide is Elongation factor Tu (Thermosipho melanesiensis (strain DSM 12029 / CIP 104789 / BI429)).